The chain runs to 244 residues: Pyridoxine 5'-phosphate synthase (244 aa).

N7 serves as a coordination point for 3-amino-2-oxopropyl phosphate. Residue D9 to H10 coordinates 1-deoxy-D-xylulose 5-phosphate. Residue R18 participates in 3-amino-2-oxopropyl phosphate binding. H43 acts as the Proton acceptor in catalysis. 1-deoxy-D-xylulose 5-phosphate contacts are provided by R45 and H50. E70 acts as the Proton acceptor in catalysis. T100 contacts 1-deoxy-D-xylulose 5-phosphate. The Proton donor role is filled by H191. Residues G192 and G213–H214 contribute to the 3-amino-2-oxopropyl phosphate site.

The protein belongs to the PNP synthase family. In terms of assembly, homooctamer; tetramer of dimers.

It is found in the cytoplasm. The enzyme catalyses 3-amino-2-oxopropyl phosphate + 1-deoxy-D-xylulose 5-phosphate = pyridoxine 5'-phosphate + phosphate + 2 H2O + H(+). It functions in the pathway cofactor biosynthesis; pyridoxine 5'-phosphate biosynthesis; pyridoxine 5'-phosphate from D-erythrose 4-phosphate: step 5/5. In terms of biological role, catalyzes the complicated ring closure reaction between the two acyclic compounds 1-deoxy-D-xylulose-5-phosphate (DXP) and 3-amino-2-oxopropyl phosphate (1-amino-acetone-3-phosphate or AAP) to form pyridoxine 5'-phosphate (PNP) and inorganic phosphate. The polypeptide is Pyridoxine 5'-phosphate synthase (Laribacter hongkongensis (strain HLHK9)).